The primary structure comprises 409 residues: ATPase ASNA1 homolog (409 aa).

Residue 21–28 (KGGVGKTT) coordinates ATP. Aspartate 62 is a catalytic residue. ATP-binding residues include glutamate 303 and asparagine 330. Residues cysteine 342 and cysteine 345 each contribute to the Zn(2+) site.

This sequence belongs to the arsA ATPase family. As to quaternary structure, homodimer.

The protein localises to the cytoplasm. Its subcellular location is the endoplasmic reticulum. Its function is as follows. ATPase required for the post-translational delivery of tail-anchored (TA) proteins to the endoplasmic reticulum. Recognizes and selectively binds the transmembrane domain of TA proteins in the cytosol. This complex then targets to the endoplasmic reticulum by membrane-bound receptors, where the tail-anchored protein is released for insertion. This process is regulated by ATP binding and hydrolysis. ATP binding drives the homodimer towards the closed dimer state, facilitating recognition of newly synthesized TA membrane proteins. ATP hydrolysis is required for insertion. Subsequently, the homodimer reverts towards the open dimer state, lowering its affinity for the membrane-bound receptor, and returning it to the cytosol to initiate a new round of targeting. The chain is ATPase ASNA1 homolog from Leishmania infantum.